Reading from the N-terminus, the 201-residue chain is Protein lin-7 homolog B (201 aa).

The Kinase interacting site motif lies at 1–13 (MAALVEPLGLERE). The L27 domain maps to 10 to 65 (LEREVSRAVELLERLQRSGELPPQKLQALQRVLQSRFCSAIREVYEQLYDTLDITG). Residues 93–175 (VVELPKTDEG…SVKLVVRYTP (83 aa)) enclose the PDZ domain.

This sequence belongs to the lin-7 family. In terms of assembly, forms a complex with CASK and CASKIN1. Component of the brain-specific heterotrimeric complex (LIN-10-LIN-2-LIN-7 complex) composed of at least APBA1, CASK, and LIN7, which associates with the motor protein KIF17 to transport vesicles along microtubules. Forms a heterotrimeric complex composed of MMP5, LIN7B and PATJ; the N-terminal L27 domain of PALS1 interacts with the L27 domain of PATJ and the C-terminal L27 domain of PALS1 interacts with the L27 domain of LIN7B. Forms a heterotrimeric complex with DLG1 and CASK via their L27 domains. Interacts with DLG4 and GRIN2B as well as CDH1 and CTNNB1, the channels KCNJ12/Kir2.2, KCNJ4/Kir2.3 and probably KCNJ2/Kir2.1 and SLC6A12/BGT-1 via its PDZ domain. The association of LIN7A with cadherin and beta-catenin is calcium-dependent, occurs at synaptic junctions and requires the actin cytoskeleton. Interacts with EGFR, ERBB2, ERBB3 and ERBB4 with both PDZ and KID domains. Interacts with ASIC3. Interacts with TOPK. Interacts with RTKN. Associates with KIF17 via APBA1. Interacts with APBA1. Interacts with MPP7. Interacts with DLG2. Interacts with DLG3.

It localises to the cell membrane. Its subcellular location is the basolateral cell membrane. The protein resides in the cell junction. The protein localises to the postsynaptic density membrane. It is found in the tight junction. Its function is as follows. Plays a role in establishing and maintaining the asymmetric distribution of channels and receptors at the plasma membrane of polarized cells. Forms membrane-associated multiprotein complexes that may regulate delivery and recycling of proteins to the correct membrane domains. The tripartite complex composed of LIN7 (LIN7A, LIN7B or LIN7C), CASK and APBA1 associates with the motor protein KIF17 to transport vesicles containing N-methyl-D-aspartate (NMDA) receptor subunit NR2B along microtubules. This complex may have the potential to couple synaptic vesicle exocytosis to cell adhesion in brain. Ensures the proper localization of GRIN2B (subunit 2B of the NMDA receptor) to neuronal postsynaptic density and may function in localizing synaptic vesicles at synapses where it is recruited by beta-catenin and cadherin. Required to localize Kir2 channels, GABA transporter (SLC6A12) and EGFR/ERBB1, ERBB2, ERBB3 and ERBB4 to the basolateral membrane of epithelial cells. May increase the amplitude of ASIC3 acid-evoked currents by stabilizing the channel at the cell surface. This is Protein lin-7 homolog B (LIN7B) from Bos taurus (Bovine).